Reading from the N-terminus, the 351-residue chain is Prohormone-2 (351 aa).

The signal sequence occupies residues 1–21; that stretch reads MMCDWVWLLLTLCSLLMIVQS. 2 consecutive propeptides follow at residues 22–177 and 192–319; these read LPTN…QTQV and ELDI…MISR. The segment covering 51–69 has biased composition (polar residues); the sequence is GNQQNHQPENNPSSSYSST. 2 disordered regions span residues 51 to 71 and 136 to 176; these read GNQQ…STAE and NEDR…VQTQ. Basic and acidic residues predominate over residues 136–145; that stretch reads NEDRRKRSEK. Positions 158-176 are enriched in low complexity; that stretch reads PSTTSFQSPTSTQQSVQTQ.

It localises to the secreted. The polypeptide is Prohormone-2 (Apis mellifera (Honeybee)).